The primary structure comprises 118 residues: 5-hydroxyisourate hydrolase (118 aa).

H7, R46, and Y115 together coordinate substrate.

This sequence belongs to the transthyretin family. 5-hydroxyisourate hydrolase subfamily. As to quaternary structure, homotetramer.

The catalysed reaction is 5-hydroxyisourate + H2O = 5-hydroxy-2-oxo-4-ureido-2,5-dihydro-1H-imidazole-5-carboxylate + H(+). Its function is as follows. Catalyzes the hydrolysis of 5-hydroxyisourate (HIU) to 2-oxo-4-hydroxy-4-carboxy-5-ureidoimidazoline (OHCU). The protein is 5-hydroxyisourate hydrolase of Brucella suis biovar 1 (strain 1330).